A 509-amino-acid polypeptide reads, in one-letter code: MKRALISVSDKNGIVPFAEKLVELGVEIISTGGTKAAFEQAGVPVTGIEAVTEFPEMLDGRVKTLHPAIHGGLLARRDTAEHMEAIAAHDIKPIDLVIVNLYPFQETIQKPGVTLEEAIENIDIGGPSMLRSAAKNYAAVTVVVDTADYDTVLTELQEHGATTFETRQRLAAKVFRHTAAYDALIAEYLTDVTGETFPEKVTLTYNRKQVLRYGENPHQDAAFYTEPRAIENSISAAKQLHGKELSYNNIRDADAALKIASEFKEPVAVAVKHMNPCGVGVGETIEEAYLKAYEADEISIFGGIVALNKEVDAKTAEHMSKIFLEIIIAPSFSEAGFAILAKKKNIRLLTVPFAGNVEGFEKTSVNGGLLIQANDALVEDTTSYEVVTEKQPTNSEMKALLAQWKIVKHVKSNAIVVGSDKQTLGIGAGQMNRIGSALIALEQAGEKAKGAVLASDAFFPMDDTVEAAAKAGITAIIQPGGSIKDKESIAMADKYGISMVLTHVRHFKH.

The MGS-like domain occupies 1 to 144; that stretch reads MKRALISVSD…KNYAAVTVVV (144 aa).

Belongs to the PurH family.

The catalysed reaction is (6R)-10-formyltetrahydrofolate + 5-amino-1-(5-phospho-beta-D-ribosyl)imidazole-4-carboxamide = 5-formamido-1-(5-phospho-D-ribosyl)imidazole-4-carboxamide + (6S)-5,6,7,8-tetrahydrofolate. The enzyme catalyses IMP + H2O = 5-formamido-1-(5-phospho-D-ribosyl)imidazole-4-carboxamide. It functions in the pathway purine metabolism; IMP biosynthesis via de novo pathway; 5-formamido-1-(5-phospho-D-ribosyl)imidazole-4-carboxamide from 5-amino-1-(5-phospho-D-ribosyl)imidazole-4-carboxamide (10-formyl THF route): step 1/1. It participates in purine metabolism; IMP biosynthesis via de novo pathway; IMP from 5-formamido-1-(5-phospho-D-ribosyl)imidazole-4-carboxamide: step 1/1. This is Bifunctional purine biosynthesis protein PurH from Listeria innocua serovar 6a (strain ATCC BAA-680 / CLIP 11262).